The sequence spans 191 residues: MDLPEPIRRRLGDFSRTVFVDQSRTQPSFEEHANFLDQNKDVVSSLPLQMSLYFNMWFFPFWWISEVVMLDLKYSALADYYKFILITILIVMTLIEAIRLYLGNAGNLQEKVPELAGFWLLTFLLQFPLILFQLFNEAVLVQPLERGVHIILALFIFAEVLFGFVALRTMVRHTESRFHLRQFHGIQELRT.

A run of 4 helical transmembrane segments spans residues M50–L70, F83–G103, L115–F135, and G147–L167.

Belongs to the TMEM17 family. Part of the tectonic-like complex (also named B9 complex).

The protein resides in the cell projection. It localises to the cilium membrane. In terms of biological role, transmembrane component of the tectonic-like complex, a complex localized at the transition zone of primary cilia and acting as a barrier that prevents diffusion of transmembrane proteins between the cilia and plasma membranes. Required for ciliogenesis and sonic hedgehog/SHH signaling. The chain is Transmembrane protein 17B (Tmem17b) from Danio rerio (Zebrafish).